Reading from the N-terminus, the 198-residue chain is Probable GTP-binding protein EngB (198 aa).

One can recognise an EngB-type G domain in the interval 36 to 198; the sequence is SDPQFAFIGR…NLSKLQELLE (163 aa). Residues 44 to 51, 70 to 74, 88 to 91, 155 to 158, and 182 to 184 contribute to the GTP site; these read GRSNVGKS, GRTQL, DLPG, NKID, and ISA. The Mg(2+) site is built by Ser51 and Thr72.

It belongs to the TRAFAC class TrmE-Era-EngA-EngB-Septin-like GTPase superfamily. EngB GTPase family. The cofactor is Mg(2+).

Its function is as follows. Necessary for normal cell division and for the maintenance of normal septation. The protein is Probable GTP-binding protein EngB of Mesomycoplasma hyopneumoniae (strain J / ATCC 25934 / NCTC 10110) (Mycoplasma hyopneumoniae).